A 295-amino-acid chain; its full sequence is Enolase-phosphatase E1 (295 aa).

Mg(2+)-binding residues include Asp-20 and Glu-22. Substrate-binding positions include 153–154 and Lys-187; that span reads SS. Position 212 (Asp-212) interacts with Mg(2+). The segment at 260–295 is disordered; it reads ETKEENGGATNGKRKIEETNDDVAEEDKAQVYPNKK.

Belongs to the HAD-like hydrolase superfamily. MasA/MtnC family. As to quaternary structure, monomer. It depends on Mg(2+) as a cofactor.

Its subcellular location is the cytoplasm. The protein localises to the nucleus. It carries out the reaction 5-methylsulfanyl-2,3-dioxopentyl phosphate + H2O = 1,2-dihydroxy-5-(methylsulfanyl)pent-1-en-3-one + phosphate. Its pathway is amino-acid biosynthesis; L-methionine biosynthesis via salvage pathway; L-methionine from S-methyl-5-thio-alpha-D-ribose 1-phosphate: step 3/6. The protein operates within amino-acid biosynthesis; L-methionine biosynthesis via salvage pathway; L-methionine from S-methyl-5-thio-alpha-D-ribose 1-phosphate: step 4/6. Functionally, bifunctional enzyme that catalyzes the enolization of 2,3-diketo-5-methylthiopentyl-1-phosphate (DK-MTP-1-P) into the intermediate 2-hydroxy-3-keto-5-methylthiopentenyl-1-phosphate (HK-MTPenyl-1-P), which is then dephosphorylated to form the acireductone 1,2-dihydroxy-3-keto-5-methylthiopentene (DHK-MTPene). The chain is Enolase-phosphatase E1 from Anopheles gambiae (African malaria mosquito).